A 233-amino-acid chain; its full sequence is Biosynthetic peptidoglycan transglycosylase (233 aa).

Residues 8–28 (LIALPVGIFIFFNAYVYGNII) traverse the membrane as a helical segment.

The protein belongs to the glycosyltransferase 51 family.

The protein resides in the cell inner membrane. The catalysed reaction is [GlcNAc-(1-&gt;4)-Mur2Ac(oyl-L-Ala-gamma-D-Glu-L-Lys-D-Ala-D-Ala)](n)-di-trans,octa-cis-undecaprenyl diphosphate + beta-D-GlcNAc-(1-&gt;4)-Mur2Ac(oyl-L-Ala-gamma-D-Glu-L-Lys-D-Ala-D-Ala)-di-trans,octa-cis-undecaprenyl diphosphate = [GlcNAc-(1-&gt;4)-Mur2Ac(oyl-L-Ala-gamma-D-Glu-L-Lys-D-Ala-D-Ala)](n+1)-di-trans,octa-cis-undecaprenyl diphosphate + di-trans,octa-cis-undecaprenyl diphosphate + H(+). The protein operates within cell wall biogenesis; peptidoglycan biosynthesis. Functionally, peptidoglycan polymerase that catalyzes glycan chain elongation from lipid-linked precursors. The polypeptide is Biosynthetic peptidoglycan transglycosylase (Neisseria meningitidis serogroup A / serotype 4A (strain DSM 15465 / Z2491)).